Here is a 137-residue protein sequence, read N- to C-terminus: uncharacterized protein (137 aa).

An N-terminal signal peptide occupies residues 1–19; sequence MVAFYGIFLFGTVYLFGLA.

This is an uncharacterized protein from Acanthamoeba polyphaga (Amoeba).